The following is a 206-amino-acid chain: Type III pantothenate kinase (206 aa).

Position 5–12 (5–12 (DIGNTFLH)) interacts with ATP. Residues Y69 and 73 to 76 (GVDR) contribute to the substrate site. D75 (proton acceptor) is an active-site residue. Residue D90 participates in K(+) binding. Residue S93 coordinates ATP. T145 serves as a coordination point for substrate.

Belongs to the type III pantothenate kinase family. Homodimer. It depends on NH4(+) as a cofactor. K(+) serves as cofactor.

The protein localises to the cytoplasm. It catalyses the reaction (R)-pantothenate + ATP = (R)-4'-phosphopantothenate + ADP + H(+). It functions in the pathway cofactor biosynthesis; coenzyme A biosynthesis; CoA from (R)-pantothenate: step 1/5. Functionally, catalyzes the phosphorylation of pantothenate (Pan), the first step in CoA biosynthesis. In Helicobacter hepaticus (strain ATCC 51449 / 3B1), this protein is Type III pantothenate kinase.